The chain runs to 415 residues: Serine hydroxymethyltransferase 1 (415 aa).

(6S)-5,6,7,8-tetrahydrofolate-binding positions include L122 and 126–128; that span reads GHL. An N6-(pyridoxal phosphate)lysine modification is found at K230.

This sequence belongs to the SHMT family. Homodimer. Pyridoxal 5'-phosphate is required as a cofactor.

The protein localises to the cytoplasm. It carries out the reaction (6R)-5,10-methylene-5,6,7,8-tetrahydrofolate + glycine + H2O = (6S)-5,6,7,8-tetrahydrofolate + L-serine. Its pathway is one-carbon metabolism; tetrahydrofolate interconversion. The protein operates within amino-acid biosynthesis; glycine biosynthesis; glycine from L-serine: step 1/1. Its function is as follows. Catalyzes the reversible interconversion of serine and glycine with tetrahydrofolate (THF) serving as the one-carbon carrier. This reaction serves as the major source of one-carbon groups required for the biosynthesis of purines, thymidylate, methionine, and other important biomolecules. Also exhibits THF-independent aldolase activity toward beta-hydroxyamino acids, producing glycine and aldehydes, via a retro-aldol mechanism. The sequence is that of Serine hydroxymethyltransferase 1 from Burkholderia thailandensis (strain ATCC 700388 / DSM 13276 / CCUG 48851 / CIP 106301 / E264).